Reading from the N-terminus, the 426-residue chain is Histidine--tRNA ligase (426 aa).

This sequence belongs to the class-II aminoacyl-tRNA synthetase family. Homodimer.

Its subcellular location is the cytoplasm. It carries out the reaction tRNA(His) + L-histidine + ATP = L-histidyl-tRNA(His) + AMP + diphosphate + H(+). This Chlorobium phaeovibrioides (strain DSM 265 / 1930) (Prosthecochloris vibrioformis (strain DSM 265)) protein is Histidine--tRNA ligase.